The following is a 939-amino-acid chain: AP-2 complex subunit alpha-2 (939 aa).

A 1,2-diacyl-sn-glycero-3-phospho-(1D-myo-inositol-3,4,5-trisphosphate) contacts are provided by residues 11–12 (RG), lysine 43, tyrosine 53, and 57–61 (KYVCK). The interval 612 to 681 (LAKLKKKKGP…AGPPPSSGGS (70 aa)) is disordered. Over residues 646–667 (PASTSAVSTPSPSADLLGLGAA) the composition is skewed to low complexity. Residues 668–677 (PPAPAGPPPS) show a composition bias toward pro residues.

This sequence belongs to the adaptor complexes large subunit family. Adaptor protein complex 2 (AP-2) is a heterotetramer composed of two large adaptins (alpha-type subunit AP2A1 or AP2A2 and beta-type subunit AP2B1), a medium adaptin (mu-type subunit AP2M1) and a small adaptin (sigma-type subunit AP2S1). Binds EPN1, EPS15, AMPH, SNAP91 and BIN1. Interacts with HIP1. Interacts with DGKD. Interacts with DENND1A, DENND1B and DENND1C. Interacts with FCHO1 and DAB2. Interacts with ATAT1; this interaction is required for efficient alpha-tubulin acetylation by ATAT1. Interacts with KIAA1107. Together with AP2B1 and AP2M1, it interacts with ADAM10; this interaction facilitates ADAM10 endocytosis from the plasma membrane during long-term potentiation in hippocampal neurons. Interacts with CLN3 (via dileucine motif). Interacts with ABCB11; this interaction regulates cell membrane expression of ABCB11 through its internalization in a clathrin-dependent manner and its subsequent degradation. Interacts with Cacfd1. Interacts with DNAJC6. As to expression, expressed in the brain (at protein level).

The protein localises to the cell membrane. Its subcellular location is the membrane. It localises to the coated pit. In terms of biological role, component of the adaptor protein complex 2 (AP-2). Adaptor protein complexes function in protein transport via transport vesicles in different membrane traffic pathways. Adaptor protein complexes are vesicle coat components and appear to be involved in cargo selection and vesicle formation. AP-2 is involved in clathrin-dependent endocytosis in which cargo proteins are incorporated into vesicles surrounded by clathrin (clathrin-coated vesicles, CCVs) which are destined for fusion with the early endosome. The clathrin lattice serves as a mechanical scaffold but is itself unable to bind directly to membrane components. Clathrin-associated adaptor protein (AP) complexes which can bind directly to both the clathrin lattice and to the lipid and protein components of membranes are considered to be the major clathrin adaptors contributing the CCV formation. AP-2 also serves as a cargo receptor to selectively sort the membrane proteins involved in receptor-mediated endocytosis. AP-2 seems to play a role in the recycling of synaptic vesicle membranes from the presynaptic surface. AP-2 recognizes Y-X-X-[FILMV] (Y-X-X-Phi) and [ED]-X-X-X-L-[LI] endocytosis signal motifs within the cytosolic tails of transmembrane cargo molecules. AP-2 may also play a role in maintaining normal post-endocytic trafficking through the ARF6-regulated, non-clathrin pathway. During long-term potentiation in hippocampal neurons, AP-2 is responsible for the endocytosis of ADAM10. The AP-2 alpha subunit binds polyphosphoinositide-containing lipids, positioning AP-2 on the membrane. The AP-2 alpha subunit acts via its C-terminal appendage domain as a scaffolding platform for endocytic accessory proteins. The AP-2 alpha and AP-2 sigma subunits are thought to contribute to the recognition of the [ED]-X-X-X-L-[LI] motif. The chain is AP-2 complex subunit alpha-2 (AP2A2) from Homo sapiens (Human).